The chain runs to 131 residues: Small ribosomal subunit protein uS8 (131 aa).

The protein belongs to the universal ribosomal protein uS8 family. In terms of assembly, part of the 30S ribosomal subunit. Contacts proteins S5 and S12.

Its function is as follows. One of the primary rRNA binding proteins, it binds directly to 16S rRNA central domain where it helps coordinate assembly of the platform of the 30S subunit. This Porphyromonas gingivalis (strain ATCC 33277 / DSM 20709 / CIP 103683 / JCM 12257 / NCTC 11834 / 2561) protein is Small ribosomal subunit protein uS8.